We begin with the raw amino-acid sequence, 329 residues long: Ribosome biogenesis regulatory protein homolog (329 aa).

Disordered regions lie at residues 227 to 248 (KANI…VSAE) and 262 to 329 (KKAK…NKRK). A compositionally biased stretch (basic and acidic residues) spans 278-295 (LREKKEKQEKKGAKEATR). Over residues 320–329 (AKKKGANKRK) the composition is skewed to basic residues.

Belongs to the RRS1 family.

The protein resides in the nucleus. It is found in the nucleolus. Involved in ribosomal large subunit assembly. The protein is Ribosome biogenesis regulatory protein homolog of Caenorhabditis briggsae.